We begin with the raw amino-acid sequence, 465 residues long: Cystathionine beta-lyase (465 aa).

N6-(pyridoxal phosphate)lysine is present on Lys213.

Belongs to the trans-sulfuration enzymes family. It depends on pyridoxal 5'-phosphate as a cofactor.

It localises to the cytoplasm. It is found in the nucleus. It catalyses the reaction L,L-cystathionine + H2O = L-homocysteine + pyruvate + NH4(+). The catalysed reaction is an S-substituted L-cysteine + H2O = a thiol + pyruvate + NH4(+). The protein operates within amino-acid biosynthesis; L-methionine biosynthesis via de novo pathway; L-homocysteine from L-cystathionine: step 1/1. The protein is Cystathionine beta-lyase (STR3) of Saccharomyces cerevisiae (strain ATCC 204508 / S288c) (Baker's yeast).